The following is a 467-amino-acid chain: Probable glutamate decarboxylase gamma (467 aa).

Position 278 is an N6-(pyridoxal phosphate)lysine (Lys-278).

It belongs to the group II decarboxylase family. The cofactor is pyridoxal 5'-phosphate.

The catalysed reaction is L-glutamate + H(+) = 4-aminobutanoate + CO2. In Listeria monocytogenes serovar 1/2a (strain ATCC BAA-679 / EGD-e), this protein is Probable glutamate decarboxylase gamma.